We begin with the raw amino-acid sequence, 283 residues long: Phosphatidylglycerol--prolipoprotein diacylglyceryl transferase (283 aa).

4 helical membrane-spanning segments follow: residues 19–39 (IGPI…LIGV), 59–79 (LSIW…VLFQ), 90–110 (IIAI…GTLA), and 120–140 (VPFW…QAIG). Arg141 contributes to the a 1,2-diacyl-sn-glycero-3-phospho-(1'-sn-glycerol) binding site. A run of 3 helical transmembrane segments spans residues 181–201 (TFLY…TLFF), 212–232 (VGTL…WIEG), and 245–265 (IAQV…AWLY).

Belongs to the Lgt family.

The protein localises to the cell inner membrane. It catalyses the reaction L-cysteinyl-[prolipoprotein] + a 1,2-diacyl-sn-glycero-3-phospho-(1'-sn-glycerol) = an S-1,2-diacyl-sn-glyceryl-L-cysteinyl-[prolipoprotein] + sn-glycerol 1-phosphate + H(+). It participates in protein modification; lipoprotein biosynthesis (diacylglyceryl transfer). In terms of biological role, catalyzes the transfer of the diacylglyceryl group from phosphatidylglycerol to the sulfhydryl group of the N-terminal cysteine of a prolipoprotein, the first step in the formation of mature lipoproteins. The protein is Phosphatidylglycerol--prolipoprotein diacylglyceryl transferase of Nostoc sp. (strain PCC 7120 / SAG 25.82 / UTEX 2576).